A 260-amino-acid chain; its full sequence is Thymidylate synthase (260 aa).

Arginine 21 contributes to the dUMP binding site. Histidine 51 is a (6R)-5,10-methylene-5,6,7,8-tetrahydrofolate binding site. Residue 122–123 participates in dUMP binding; sequence RR. The Nucleophile role is filled by cysteine 142. DUMP is bound by residues 162-165, asparagine 173, and 203-205; these read RSAD and HLY. Aspartate 165 contacts (6R)-5,10-methylene-5,6,7,8-tetrahydrofolate. Residue alanine 259 participates in (6R)-5,10-methylene-5,6,7,8-tetrahydrofolate binding.

This sequence belongs to the thymidylate synthase family. Bacterial-type ThyA subfamily. As to quaternary structure, homodimer.

The protein localises to the cytoplasm. It carries out the reaction dUMP + (6R)-5,10-methylene-5,6,7,8-tetrahydrofolate = 7,8-dihydrofolate + dTMP. The protein operates within pyrimidine metabolism; dTTP biosynthesis. Its function is as follows. Catalyzes the reductive methylation of 2'-deoxyuridine-5'-monophosphate (dUMP) to 2'-deoxythymidine-5'-monophosphate (dTMP) while utilizing 5,10-methylenetetrahydrofolate (mTHF) as the methyl donor and reductant in the reaction, yielding dihydrofolate (DHF) as a by-product. This enzymatic reaction provides an intracellular de novo source of dTMP, an essential precursor for DNA biosynthesis. The sequence is that of Thymidylate synthase from Methylococcus capsulatus (strain ATCC 33009 / NCIMB 11132 / Bath).